The chain runs to 344 residues: Inositol 2-dehydrogenase/D-chiro-inositol 3-dehydrogenase (344 aa).

The protein belongs to the Gfo/Idh/MocA family. In terms of assembly, homotetramer.

The catalysed reaction is myo-inositol + NAD(+) = scyllo-inosose + NADH + H(+). It carries out the reaction 1D-chiro-inositol + NAD(+) = scyllo-inosine + NADH + H(+). It functions in the pathway polyol metabolism; myo-inositol degradation into acetyl-CoA; acetyl-CoA from myo-inositol: step 1/7. Involved in the oxidation of myo-inositol (MI) and D-chiro-inositol (DCI) to 2-keto-myo-inositol (2KMI or 2-inosose) and 1-keto-D-chiro-inositol (1KDCI), respectively. Can also use D-glucose and D-xylose, and shows a trace of activity with D-ribose and D-fructose. The protein is Inositol 2-dehydrogenase/D-chiro-inositol 3-dehydrogenase (iolG) of Bacillus subtilis (strain 168).